A 301-amino-acid chain; its full sequence is Protoheme IX farnesyltransferase (301 aa).

The next 8 membrane-spanning stretches (helical) occupy residues 25 to 45 (VTQL…PGMV), 47 to 67 (WTPL…AFAI), 97 to 117 (ILLF…TFAN), 119 to 139 (LTMW…TLLL), 147 to 167 (IVIG…AVTG), 173 to 193 (AWIL…ALAL), 235 to 255 (FISG…GALF), and 279 to 299 (IVYL…RVLI).

This sequence belongs to the UbiA prenyltransferase family. Protoheme IX farnesyltransferase subfamily.

It is found in the cell inner membrane. It catalyses the reaction heme b + (2E,6E)-farnesyl diphosphate + H2O = Fe(II)-heme o + diphosphate. It participates in porphyrin-containing compound metabolism; heme O biosynthesis; heme O from protoheme: step 1/1. Converts heme B (protoheme IX) to heme O by substitution of the vinyl group on carbon 2 of heme B porphyrin ring with a hydroxyethyl farnesyl side group. This chain is Protoheme IX farnesyltransferase, found in Paraburkholderia xenovorans (strain LB400).